The following is a 269-amino-acid chain: NAD kinase (269 aa).

The active-site Proton acceptor is the Asp45. Residues Asp45–Gly46, Asn122–Glu123, Arg149, Asp151, and Ala186 contribute to the NAD(+) site.

It belongs to the NAD kinase family. A divalent metal cation serves as cofactor.

The protein resides in the cytoplasm. It catalyses the reaction NAD(+) + ATP = ADP + NADP(+) + H(+). Involved in the regulation of the intracellular balance of NAD and NADP, and is a key enzyme in the biosynthesis of NADP. Catalyzes specifically the phosphorylation on 2'-hydroxyl of the adenosine moiety of NAD to yield NADP. The protein is NAD kinase of Staphylococcus epidermidis (strain ATCC 35984 / DSM 28319 / BCRC 17069 / CCUG 31568 / BM 3577 / RP62A).